The chain runs to 211 residues: V-type ATP synthase subunit D (211 aa).

The protein belongs to the V-ATPase D subunit family.

Produces ATP from ADP in the presence of a proton gradient across the membrane. In Fusobacterium nucleatum subsp. nucleatum (strain ATCC 25586 / DSM 15643 / BCRC 10681 / CIP 101130 / JCM 8532 / KCTC 2640 / LMG 13131 / VPI 4355), this protein is V-type ATP synthase subunit D.